The sequence spans 373 residues: Potential protein lysine methyltransferase SET6 (373 aa).

The region spanning 12–338 is the SET domain; the sequence is PFFQVRQTKW…KDEQICIDYS (327 aa).

This sequence belongs to the class V-like SAM-binding methyltransferase superfamily.

Involved in resistance to compounds that target ergosterol biosynthesis, including fenpropimorph, dyclonine, and alverine citrate. Since a deletion in the absence of these compounds does not have an effect on growth, is more likely to be involved in compound availability. This chain is Potential protein lysine methyltransferase SET6 (SET6), found in Saccharomyces cerevisiae (strain ATCC 204508 / S288c) (Baker's yeast).